The primary structure comprises 700 residues: Endoglucanase A (700 aa).

An N-terminal signal peptide occupies residues 1–33; sequence MKTRQRKRLFVSAALAVSLTMTVPMPASVNAAA. Glutamate 213 is an active-site residue. A CBM3 domain is found at 550-700; sequence NSDLVVQYKD…DGQLVWGIEP (151 aa).

This sequence belongs to the glycosyl hydrolase 44 (cellulase J) family. In terms of processing, a short form (EG-A-S) arises from post-translational proteolysis of approximately 150 AA at the C-terminus of EG-A-L.

It catalyses the reaction Endohydrolysis of (1-&gt;4)-beta-D-glucosidic linkages in cellulose, lichenin and cereal beta-D-glucans.. This is Endoglucanase A (celA) from Paenibacillus lautus (Bacillus lautus).